Consider the following 120-residue polypeptide: Large ribosomal subunit protein uL18 (120 aa).

The protein belongs to the universal ribosomal protein uL18 family. Part of the 50S ribosomal subunit; part of the 5S rRNA/L5/L18/L25 subcomplex. Contacts the 5S and 23S rRNAs.

Functionally, this is one of the proteins that bind and probably mediate the attachment of the 5S RNA into the large ribosomal subunit, where it forms part of the central protuberance. The sequence is that of Large ribosomal subunit protein uL18 from Oleidesulfovibrio alaskensis (strain ATCC BAA-1058 / DSM 17464 / G20) (Desulfovibrio alaskensis).